A 500-amino-acid polypeptide reads, in one-letter code: Chromosomal replication initiator protein DnaA (500 aa).

The interval 1-37 (MSDTPFGDADHPRPAPIHPDAVLPPPMSSQSADNDPT) is disordered. A domain I, interacts with DnaA modulators region spans residues 1–103 (MSDTPFGDAD…EELLSDHFHK (103 aa)). Residues 14 to 27 (PAPIHPDAVLPPPM) show a composition bias toward pro residues. A domain II region spans residues 103–161 (KAIHLAITIDPDLELALGAPDHEDEEEEVPPAQFVPKVTVGVTEPSARPTTTIDDDEGN). A domain III, AAA+ region region spans residues 162–378 (RLNPKYTFDS…GALIRVTAFA (217 aa)). G206, G208, K209, and T210 together coordinate ATP. The segment at 379 to 500 (SLNQQPVDIS…SEITNRIKQY (122 aa)) is domain IV, binds dsDNA.

It belongs to the DnaA family. In terms of assembly, oligomerizes as a right-handed, spiral filament on DNA at oriC.

The protein localises to the cytoplasm. Plays an essential role in the initiation and regulation of chromosomal replication. ATP-DnaA binds to the origin of replication (oriC) to initiate formation of the DNA replication initiation complex once per cell cycle. Binds the DnaA box (a 9 base pair repeat at the origin) and separates the double-stranded (ds)DNA. Forms a right-handed helical filament on oriC DNA; dsDNA binds to the exterior of the filament while single-stranded (ss)DNA is stabiized in the filament's interior. The ATP-DnaA-oriC complex binds and stabilizes one strand of the AT-rich DNA unwinding element (DUE), permitting loading of DNA polymerase. After initiation quickly degrades to an ADP-DnaA complex that is not apt for DNA replication. Binds acidic phospholipids. This chain is Chromosomal replication initiator protein DnaA, found in Cutibacterium acnes (strain DSM 16379 / KPA171202) (Propionibacterium acnes).